The sequence spans 286 residues: uncharacterized protein (286 aa).

In terms of domain architecture, HTH lysR-type spans 1-58 (MLLEGIETLLVLSKEKTMSRTGSQLYISQSAVSKRIANLEKKLGKKLIVPAGRHIKLT). Positions 18 to 37 (MSRTGSQLYISQSAVSKRIA) form a DNA-binding region, H-T-H motif.

The protein belongs to the LysR transcriptional regulatory family.

This is an uncharacterized protein from Vibrio cholerae serotype O1 (strain ATCC 39315 / El Tor Inaba N16961).